The primary structure comprises 288 residues: MAGAKEIRSKIASIKSTQKITSAMEKVAVSKMRKAQMRMAASRPYAERIRQVIGHLAYANPEYRHPFMVERPVKRVGYIVVSTDRGLCGGLNINLFKVLIKNMKEWHDQKVEVDLCVIGNKGASFFRSFGGNVVAAIGNLGEEPSINDLIGSVKVMLDGFHEGRIDRLYLVSNKFINTMTQKPTLDQLLPLAADDSAEPVKKGQWDYLYEPDAQQLLDALLVRFIESQVYQAVVENGAAEQAARMIAMKNATDNAGELISDLQLVYNKARQAAITQEISEIVGGAAAV.

This sequence belongs to the ATPase gamma chain family. As to quaternary structure, F-type ATPases have 2 components, CF(1) - the catalytic core - and CF(0) - the membrane proton channel. CF(1) has five subunits: alpha(3), beta(3), gamma(1), delta(1), epsilon(1). CF(0) has three main subunits: a, b and c.

The protein localises to the cell inner membrane. In terms of biological role, produces ATP from ADP in the presence of a proton gradient across the membrane. The gamma chain is believed to be important in regulating ATPase activity and the flow of protons through the CF(0) complex. The chain is ATP synthase gamma chain from Stutzerimonas stutzeri (strain A1501) (Pseudomonas stutzeri).